The primary structure comprises 110 residues: MNHCFLILFTLIVFTVVWSLEENEEYPDEDEMIESFMDGYSYRGDDGTCILKGDHCHGTCDCCGWTTTCRKSKSAGGKICKSEGSSISAFNAIAKGVAAMKKAKCKHKSG.

Positions 1-19 (MNHCFLILFTLIVFTVVWS) are cleaved as a signal peptide. A propeptide spanning residues 20–43 (LEENEEYPDEDEMIESFMDGYSYR) is cleaved from the precursor. Cystine bridges form between Cys49-Cys63, Cys56-Cys69, Cys60-Cys105, and Cys62-Cys80.

This sequence belongs to the neurotoxin 03 (Tx2) family. 02 subfamily. Expressed by the venom gland.

It localises to the secreted. Probable ion channel inhibitor. The polypeptide is U32-theraphotoxin-Cg1a (Chilobrachys guangxiensis (Chinese earth tiger tarantula)).